The sequence spans 357 residues: Serine protease 1 (357 aa).

The N-terminal stretch at 1-29 (MRRTTRARTGLSALLLAASLGLGAAPAGA) is a signal peptide. Positions 30 to 170 (DAPQRPAPTP…TRVPGVFQRE (141 aa)) are excised as a propeptide. A disulfide bond links cysteine 184 and cysteine 204. Active-site charge relay system residues include histidine 203, aspartate 232, and serine 313. Residues cysteine 307 and cysteine 333 are joined by a disulfide bond.

This sequence belongs to the peptidase S1 family.

Its subcellular location is the secreted. Functionally, serine protease that preferentially cleaves peptide bonds on the C-terminal side of aspartate and glutamate with a 10-fold higher reactivity for a glutamyl bond than an aspartyl bond. The sequence is that of Serine protease 1 from Streptomyces fradiae (Streptomyces roseoflavus).